The following is a 538-amino-acid chain: Bifunctional purine biosynthesis protein PurH (538 aa).

The MGS-like domain maps to 8–158 (IPAPDKVKIR…KNHAYVTVVT (151 aa)).

This sequence belongs to the PurH family.

The enzyme catalyses (6R)-10-formyltetrahydrofolate + 5-amino-1-(5-phospho-beta-D-ribosyl)imidazole-4-carboxamide = 5-formamido-1-(5-phospho-D-ribosyl)imidazole-4-carboxamide + (6S)-5,6,7,8-tetrahydrofolate. It carries out the reaction IMP + H2O = 5-formamido-1-(5-phospho-D-ribosyl)imidazole-4-carboxamide. Its pathway is purine metabolism; IMP biosynthesis via de novo pathway; 5-formamido-1-(5-phospho-D-ribosyl)imidazole-4-carboxamide from 5-amino-1-(5-phospho-D-ribosyl)imidazole-4-carboxamide (10-formyl THF route): step 1/1. It functions in the pathway purine metabolism; IMP biosynthesis via de novo pathway; IMP from 5-formamido-1-(5-phospho-D-ribosyl)imidazole-4-carboxamide: step 1/1. The protein is Bifunctional purine biosynthesis protein PurH of Agrobacterium fabrum (strain C58 / ATCC 33970) (Agrobacterium tumefaciens (strain C58)).